We begin with the raw amino-acid sequence, 894 residues long: Probable ion channel SYM8 (894 aa).

A disordered region spans residues 1-124; the sequence is MAKSNEEPNS…PPSLPIAITK (124 aa). 3 stretches are compositionally biased toward polar residues: residues 7–16, 24–33, and 44–63; these read EPNSNLNTNK, TLAQQPSLNL, and IGNS…QRNY. A run of 4 helical transmembrane segments spans residues 134–154, 204–224, 267–287, and 319–339; these read SPIF…SAFL, TISL…YKYI, LALL…LYAV, and IVSV…LGLV. 2 consecutive RCK N-terminal domains span residues 360-501 and 620-769; these read RNHV…ETVV and PEKI…DKSI. Residues 390–415 adopt a coiled-coil conformation; the sequence is VIVVLAEKEKEEMEMDIAKLEFDFMG.

This sequence belongs to the castor/pollux (TC 1.A.1.23) family. As to quaternary structure, homotetramer.

The protein localises to the nucleus membrane. Functionally, required for both rhizobial and mycorrhizal symbiosis. Involved in Nod-factor-induced calcium spiking. May induce a change in membrane polarization that activates the opening of a calcium channel required for calcium spiking. Might be calcium gated. The sequence is that of Probable ion channel SYM8 (SYM8) from Pisum sativum (Garden pea).